The sequence spans 407 residues: Peptidase T (407 aa).

His77 provides a ligand contact to Zn(2+). Asp79 is an active-site residue. Asp140 lines the Zn(2+) pocket. The active-site Proton acceptor is the Glu174. Residues Glu175, Asp197, and His379 each coordinate Zn(2+).

It belongs to the peptidase M20B family. Requires Zn(2+) as cofactor.

It is found in the cytoplasm. It carries out the reaction Release of the N-terminal residue from a tripeptide.. Its function is as follows. Cleaves the N-terminal amino acid of tripeptides. In Bacteroides fragilis (strain YCH46), this protein is Peptidase T.